The following is a 247-amino-acid chain: Probable 2-phosphosulfolactate phosphatase (247 aa).

This sequence belongs to the ComB family. Mg(2+) serves as cofactor.

It catalyses the reaction (2R)-O-phospho-3-sulfolactate + H2O = (2R)-3-sulfolactate + phosphate. The chain is Probable 2-phosphosulfolactate phosphatase from Clostridium perfringens (strain SM101 / Type A).